A 112-amino-acid polypeptide reads, in one-letter code: MCKDSQKPSVPSHGPKTPSCKGVKAPHSSRPRAWKQDLEQSLAAAYVPVVVDSKGQNPDKLRFNFYTSQYSNSLNPFYTLQKPTCGYLYRRDTDHTRKRFDVPPANLVLWRS.

Residues Met1 to Trp34 form a disordered region.

It belongs to the CIMIP3-like family.

It localises to the cytoplasm. The protein localises to the cytoskeleton. It is found in the flagellum axoneme. The chain is Ciliary microtubule inner protein 3 from Homo sapiens (Human).